Here is a 572-residue protein sequence, read N- to C-terminus: Methionine--tRNA ligase (572 aa).

The 'HIGH' region signature appears at 11–21; it reads PYINGIKHLGN. Zn(2+) contacts are provided by Cys-143, Cys-146, Cys-156, and Cys-159. Positions 346-350 match the 'KMSKS' region motif; sequence QFSTS. ATP is bound at residue Thr-349.

It belongs to the class-I aminoacyl-tRNA synthetase family. MetG type 1 subfamily. As to quaternary structure, monomer. The cofactor is Zn(2+).

The protein localises to the cytoplasm. It catalyses the reaction tRNA(Met) + L-methionine + ATP = L-methionyl-tRNA(Met) + AMP + diphosphate. In terms of biological role, is required not only for elongation of protein synthesis but also for the initiation of all mRNA translation through initiator tRNA(fMet) aminoacylation. This Roseobacter denitrificans (strain ATCC 33942 / OCh 114) (Erythrobacter sp. (strain OCh 114)) protein is Methionine--tRNA ligase.